The chain runs to 242 residues: Potassium/proton antiporter CemA (242 aa).

A run of 2 helical transmembrane segments spans residues isoleucine 116–leucine 136 and isoleucine 200–phenylalanine 220.

The protein belongs to the CemA family.

Its subcellular location is the plastid. The protein localises to the chloroplast inner membrane. The catalysed reaction is K(+)(in) + H(+)(out) = K(+)(out) + H(+)(in). Functionally, contributes to K(+)/H(+) antiport activity by supporting proton efflux to control proton extrusion and homeostasis in chloroplasts in a light-dependent manner to modulate photosynthesis. Prevents excessive induction of non-photochemical quenching (NPQ) under continuous-light conditions. Indirectly promotes efficient inorganic carbon uptake into chloroplasts. This Chloranthus spicatus (Chulantree) protein is Potassium/proton antiporter CemA.